The following is a 383-amino-acid chain: MPRSSLGLRIPEGMHDLLPDELALQEQAETSALDLFKAWAYQKVATPTLEYGACIQPVEEEGDSFFKLFDRQGHVLVLRPELTTSIARMVSTRMRGTAFPLRLCYAADVFRYSKSHKQEFRQVGVELIGSASSAADAEVVALAIEALRKIGGMDFQINLGHMGIFTGIMAELGVPQEFQLHYQEKLARKDFVGIERLVKDYGFETRVQDVLLKLPHLHGKEDMLDQVLEWSRRPSLLEAVNALRQVYRYLKDFGVQDYVSLDLGILRGFSYYTGAVFEGYVPGVGFPVVEGGRYDALYGDFGEDAPATGFAINLKAIIEQMVCSNAERPEVLVYGSDVSKVIAEARKLRQTGKRVEMCLESLTQEQAMESAECKGIKEVVCAR.

The protein belongs to the class-II aminoacyl-tRNA synthetase family. HisZ subfamily. As to quaternary structure, heteromultimer composed of HisG and HisZ subunits.

The protein localises to the cytoplasm. It participates in amino-acid biosynthesis; L-histidine biosynthesis; L-histidine from 5-phospho-alpha-D-ribose 1-diphosphate: step 1/9. Required for the first step of histidine biosynthesis. May allow the feedback regulation of ATP phosphoribosyltransferase activity by histidine. The chain is ATP phosphoribosyltransferase regulatory subunit from Desulfitobacterium hafniense (strain Y51).